The primary structure comprises 370 residues: Apolipoprotein A-V (370 aa).

Residues 1–21 form the signal peptide; sequence MASMIALLTWALALLPALASA. At Ser59 the chain carries Phosphoserine.

The protein belongs to the apolipoprotein A1/A4/E family. In terms of assembly, interacts with GPIHBP1. Interacts with SORL1; this interaction leads to APOA5 internalization and sorting either to lysosomes and degradation, or to the trans-Golgi network.

The protein localises to the secreted. It localises to the early endosome. It is found in the late endosome. Its subcellular location is the golgi apparatus. The protein resides in the trans-Golgi network. In terms of biological role, minor apolipoprotein mainly associated with HDL and to a lesser extent with VLDL. May also be associated with chylomicrons. Important determinant of plasma triglyceride (TG) levels by both being a potent stimulator of apo-CII lipoprotein lipase (LPL) TG hydrolysis and an inhibitor of the hepatic VLDL-TG production rate (without affecting the VLDL-apoB production rate). Activates poorly lecithin:cholesterol acyltransferase (LCAT) and does not enhance efflux of cholesterol from macrophages. Binds heparin. The chain is Apolipoprotein A-V (APOA5) from Acinonyx jubatus (Cheetah).